Consider the following 458-residue polypeptide: Glutamyl-tRNA(Gln) amidotransferase subunit D (458 aa).

The region spanning 97-434 (PNVSVMSTGG…KEVERLMRTN (338 aa)) is the Asparaginase/glutaminase domain. Active-site residues include threonine 107, threonine 185, aspartate 186, and lysine 264.

The protein belongs to the asparaginase 1 family. GatD subfamily. Heterodimer of GatD and GatE.

The catalysed reaction is L-glutamyl-tRNA(Gln) + L-glutamine + ATP + H2O = L-glutaminyl-tRNA(Gln) + L-glutamate + ADP + phosphate + H(+). In terms of biological role, allows the formation of correctly charged Gln-tRNA(Gln) through the transamidation of misacylated Glu-tRNA(Gln) in organisms which lack glutaminyl-tRNA synthetase. The reaction takes place in the presence of glutamine and ATP through an activated gamma-phospho-Glu-tRNA(Gln). The GatDE system is specific for glutamate and does not act on aspartate. This chain is Glutamyl-tRNA(Gln) amidotransferase subunit D, found in Methanopyrus kandleri (strain AV19 / DSM 6324 / JCM 9639 / NBRC 100938).